We begin with the raw amino-acid sequence, 249 residues long: tRNA pseudouridine synthase A (249 aa).

Aspartate 53 functions as the Nucleophile in the catalytic mechanism. Residue tyrosine 111 coordinates substrate.

Belongs to the tRNA pseudouridine synthase TruA family. As to quaternary structure, homodimer.

The catalysed reaction is uridine(38/39/40) in tRNA = pseudouridine(38/39/40) in tRNA. Its function is as follows. Formation of pseudouridine at positions 38, 39 and 40 in the anticodon stem and loop of transfer RNAs. The polypeptide is tRNA pseudouridine synthase A (Streptococcus equi subsp. zooepidemicus (strain MGCS10565)).